Consider the following 505-residue polypeptide: Flagellin (505 aa).

This sequence belongs to the bacterial flagellin family.

It is found in the secreted. The protein resides in the bacterial flagellum. Flagellin is the subunit protein which polymerizes to form the filaments of bacterial flagella. This is Flagellin (fliC) from Salmonella dublin.